The chain runs to 270 residues: Phospholysine phosphohistidine inorganic pyrophosphate phosphatase (270 aa).

The Mg(2+) site is built by D14 and S16. Substrate-binding positions include 14-16, 52-53, and K187; these read DVS and TN. Position 212 (D212) interacts with Mg(2+).

It belongs to the HAD-like hydrolase superfamily. Requires Mg(2+) as cofactor.

The protein localises to the cytoplasm. Its subcellular location is the nucleus. The enzyme catalyses diphosphate + H2O = 2 phosphate + H(+). Phosphatase that hydrolyzes imidodiphosphate, 3-phosphohistidine and 6-phospholysine. Has broad substrate specificity and can also hydrolyze inorganic diphosphate, but with lower efficiency. This is Phospholysine phosphohistidine inorganic pyrophosphate phosphatase (lhpp) from Xenopus laevis (African clawed frog).